Here is a 333-residue protein sequence, read N- to C-terminus: T-cell surface glycoprotein CD1c (333 aa).

Residues 1–17 (MLFLQFLLLALLLPGGD) form the signal peptide. At 18 to 302 (NADASQEHVS…ILYWGHHFSM (285 aa)) the chain is on the extracellular side. 4 N-linked (GlcNAc...) asparagine glycosylation sites follow: Asn-38, Asn-70, Asn-75, and Asn-146. 2 disulfide bridges follow: Cys-120–Cys-185 and Cys-225–Cys-280. Residues 206 to 296 (PEAWLSSRPS…LGGQDIILYW (91 aa)) form the Ig-like domain. The chain crosses the membrane as a helical span at residues 303 to 323 (NWIALVVIVPLVILIVLVLWF). Residues 324 to 333 (KKHCSYQDIL) lie on the Cytoplasmic side of the membrane. Positions 329–332 (YQDI) match the Internalization signal motif.

Heterodimer with B2M (beta-2-microglobulin). In terms of tissue distribution, expressed on cortical thymocytes, on certain T-cell leukemias, and in various other tissues.

The protein resides in the cell membrane. Its subcellular location is the endosome membrane. The protein localises to the lysosome. Functionally, antigen-presenting protein that binds self and non-self lipid and glycolipid antigens and presents them to T-cell receptors on natural killer T-cells. This is T-cell surface glycoprotein CD1c (CD1C) from Homo sapiens (Human).